A 244-amino-acid chain; its full sequence is Ubiquinone/menaquinone biosynthesis C-methyltransferase UbiE (244 aa).

S-adenosyl-L-methionine contacts are provided by residues Thr70, Asp91, and 117–118 (DA).

Belongs to the class I-like SAM-binding methyltransferase superfamily. MenG/UbiE family.

The catalysed reaction is a 2-demethylmenaquinol + S-adenosyl-L-methionine = a menaquinol + S-adenosyl-L-homocysteine + H(+). It carries out the reaction a 2-methoxy-6-(all-trans-polyprenyl)benzene-1,4-diol + S-adenosyl-L-methionine = a 5-methoxy-2-methyl-3-(all-trans-polyprenyl)benzene-1,4-diol + S-adenosyl-L-homocysteine + H(+). Its pathway is quinol/quinone metabolism; menaquinone biosynthesis; menaquinol from 1,4-dihydroxy-2-naphthoate: step 2/2. It functions in the pathway cofactor biosynthesis; ubiquinone biosynthesis. Methyltransferase required for the conversion of demethylmenaquinol (DMKH2) to menaquinol (MKH2) and the conversion of 2-polyprenyl-6-methoxy-1,4-benzoquinol (DDMQH2) to 2-polyprenyl-3-methyl-6-methoxy-1,4-benzoquinol (DMQH2). The protein is Ubiquinone/menaquinone biosynthesis C-methyltransferase UbiE of Nitrosospira multiformis (strain ATCC 25196 / NCIMB 11849 / C 71).